Reading from the N-terminus, the 774-residue chain is Neprilysin-2 (774 aa).

Over 1–20 the chain is Cytoplasmic; it reads MQTVIQNPNWWRRRNKLEKS. Residues 21–41 traverse the membrane as a helical; Signal-anchor for type II membrane protein segment; that stretch reads LLVSLGIMFVVLATGFGLWIG. Residues 42–774 are Extracellular-facing; that stretch reads KVLRTSPPSN…MNPVQKCEVW (733 aa). A disordered region spans residues 50 to 79; the sequence is SNPQATALHGDSTTINQVPTGTASKGKSGD. Polar residues predominate over residues 60–74; sequence DSTTINQVPTGTASK. Positions 83–774 constitute a Peptidase M13 domain; that stretch reads VCLTQECIHT…MNPVQKCEVW (692 aa). Disulfide bonds link cysteine 84/cysteine 89, cysteine 107/cysteine 759, cysteine 115/cysteine 719, cysteine 171/cysteine 424, and cysteine 646/cysteine 771. N-linked (GlcNAc...) asparagine glycans are attached at residues asparagine 173, asparagine 239, asparagine 264, asparagine 305, asparagine 315, asparagine 358, and asparagine 554. Residue histidine 609 coordinates Zn(2+). Residue glutamate 610 is part of the active site. Zn(2+) is bound at residue histidine 613. A glycan (N-linked (GlcNAc...) asparagine) is linked at asparagine 653. Residue glutamate 671 participates in Zn(2+) binding. The active-site Proton donor is the aspartate 675.

It belongs to the peptidase M13 family. Zn(2+) is required as a cofactor. In terms of processing, N-glycosylated. The soluble form is probably produced by proteolytic cleavage. As to expression, detected in the stellate cells in the main segment and the bar-shaped cells in the initial segment of male and female Malpighian tubules (at protein level). Expressed in the spermatheca (at protein level). Expressed in the somatic cyst cells of the testes, with increased expression at the tail end of elongating cysts. Expressed in the ovaries with strong expression in the posterior polar cells and in border cells of stage 8, 9, and 10 follicles. In adults and third-instar larvae, expressed in the brain, ventral ganglion, and stellate cells. Also expressed in the foregut and the imaginal disks (eye, antennal and leg) of third-instar larvae. In stage 17 embryos, expressed in the tracheal system, foregut, hindgut and epidermis. Also expressed in the stellate cell progenitors of the caudal visceral mesoderm in embryos.

The protein localises to the cell membrane. It is found in the secreted. The catalysed reaction is Preferential cleavage of polypeptides between hydrophobic residues, particularly with Phe or Tyr at P1'.. Its function is as follows. Metalloendoprotease which cleaves peptides such as tachykinin peptide TK-2 at the amino side of hydrophobic residues. Functions in female fertility, embryogenesis and memory formation. Required in females for normal patterns of egg laying, probably due to its function in sperm retention and preventing sperm displacement by rival ejaculates. Also required for normal patterns of hatching due to its important role in early embryonic development. Required in the dorsal paired medial neurons for the proper formation of middle-term memory. Also required in the mushroom body neurons where it functions redundantly with neprilysins Nep3 and Nep4 in normal long-term memory formation. The sequence is that of Neprilysin-2 from Drosophila melanogaster (Fruit fly).